A 130-amino-acid polypeptide reads, in one-letter code: uncharacterized protein (130 aa).

The region spanning 19-73 (IYSLRLAKGLSRQQLAEVIDVTHQQLQKYEKAINRISVGRLVLIAEALDRNIDYF) is the HTH cro/C1-type domain. The H-T-H motif DNA-binding region spans 30-49 (RQQLAEVIDVTHQQLQKYEK).

This is an uncharacterized protein from Rickettsia prowazekii (strain Madrid E).